The primary structure comprises 95 residues: Integration host factor subunit beta (95 aa).

Belongs to the bacterial histone-like protein family. As to quaternary structure, heterodimer of an alpha and a beta chain.

In terms of biological role, this protein is one of the two subunits of integration host factor, a specific DNA-binding protein that functions in genetic recombination as well as in transcriptional and translational control. This Klebsiella pneumoniae subsp. pneumoniae (strain ATCC 700721 / MGH 78578) protein is Integration host factor subunit beta.